Consider the following 104-residue polypeptide: Large ribosomal subunit protein uL24 (104 aa).

The protein belongs to the universal ribosomal protein uL24 family. In terms of assembly, part of the 50S ribosomal subunit.

In terms of biological role, one of two assembly initiator proteins, it binds directly to the 5'-end of the 23S rRNA, where it nucleates assembly of the 50S subunit. Its function is as follows. One of the proteins that surrounds the polypeptide exit tunnel on the outside of the subunit. This Chelativorans sp. (strain BNC1) protein is Large ribosomal subunit protein uL24.